Here is a 272-residue protein sequence, read N- to C-terminus: 2-amino-3,7-dideoxy-D-threo-hept-6-ulosonate synthase (272 aa).

Residue Asp33 is the Proton acceptor of the active site. 1-deoxy-D-threo-hexo-2,5-diulose 6-phosphate-binding positions include 33-37 and 153-155; these read DHGVS and YPR. Tyr153 functions as the Proton donor in the catalytic mechanism. Lys184 functions as the Schiff-base intermediate with substrate in the catalytic mechanism. Residues 209–210 and 237–238 each bind 1-deoxy-D-threo-hexo-2,5-diulose 6-phosphate; these read GG and GR.

The protein belongs to the DeoC/FbaB aldolase family. ADHS subfamily. In terms of assembly, homodecamer.

It catalyses the reaction 1-deoxy-D-threo-hexo-2,5-diulose 6-phosphate + L-aspartate 4-semialdehyde = 2,3-dioxopropyl phosphate + 2-amino-2,3,7-trideoxy-D-lyxo-hept-6-ulosonate. Catalyzes a transaldol reaction between 6-deoxy-5-ketofructose 1-phosphate (DKFP) and L-aspartate semialdehyde (ASA) with an elimination of hydroxypyruvaldehyde phosphate to yield 2-amino-3,7-dideoxy-D-threo-hept-6-ulosonate (ADH). Plays a key role in an alternative pathway of the biosynthesis of 3-dehydroquinate (DHQ), which is involved in the canonical pathway for the biosynthesis of aromatic amino acids and which is also a precursor for the biosynthesis of p-aminobenzoic acid (PABA) in M.maripaludis. Does not possess fructose-bisphosphate (FBP) aldolase activity. This is 2-amino-3,7-dideoxy-D-threo-hept-6-ulosonate synthase from Methanococcus maripaludis (strain DSM 14266 / JCM 13030 / NBRC 101832 / S2 / LL).